A 175-amino-acid chain; its full sequence is Sec-independent protein translocase protein TatB (175 aa).

Residues 1 to 21 (MFDIGWSELVLIGVVALIAIG) traverse the membrane as a helical segment. Disordered stretches follow at residues 100–132 (KPAETSSTTAIEAPATSSEALTTPTTPEAPTPE) and 155–175 (QAPVVAQDTAPSEAIKDAKAS). A compositionally biased stretch (low complexity) spans 111 to 132 (EAPATSSEALTTPTTPEAPTPE).

This sequence belongs to the TatB family. In terms of assembly, the Tat system comprises two distinct complexes: a TatABC complex, containing multiple copies of TatA, TatB and TatC subunits, and a separate TatA complex, containing only TatA subunits. Substrates initially bind to the TatABC complex, which probably triggers association of the separate TatA complex to form the active translocon.

The protein localises to the cell inner membrane. Its function is as follows. Part of the twin-arginine translocation (Tat) system that transports large folded proteins containing a characteristic twin-arginine motif in their signal peptide across membranes. Together with TatC, TatB is part of a receptor directly interacting with Tat signal peptides. TatB may form an oligomeric binding site that transiently accommodates folded Tat precursor proteins before their translocation. This is Sec-independent protein translocase protein TatB from Bradyrhizobium diazoefficiens (strain JCM 10833 / BCRC 13528 / IAM 13628 / NBRC 14792 / USDA 110).